A 383-amino-acid polypeptide reads, in one-letter code: MVLKVISANQAVAEAAKLAKPKVIPVYPITPQTSISEYLAKFVADGELKAEYIRVESEHSAMSACVGASGAGVRVFTATSSQGLALMHEIVYAAAGLRNPIVMANANRALSAPLSIWNDQQDSIAERDSGWMQIYVESGQEALDSVLLSYRVSEDRDVLLPSMVCLDGFILTHTVEPVDIPSQEDVDSFLPEFQPQVMLDPDEPMSLGTFTDPDYYMEARYEVEKAMERSRKIIERACREFSEMFGREYGLVEEYRCEDAEIILVAMGSVCSTLREVIDELRDKGKAVGLLKVRVHRPFPAEEIKSAVRNASKVAVLDKNITFSVGGALYTEISALLRDREVYGFIVGLGGRDITPAHIEEIVRRTENPERSVTWIGLKEESE.

In terms of assembly, heterotetramer of one alpha, one beta, one delta and one gamma chain.

It carries out the reaction 2 oxidized [2Fe-2S]-[ferredoxin] + pyruvate + CoA = 2 reduced [2Fe-2S]-[ferredoxin] + acetyl-CoA + CO2 + H(+). In Methanothermobacter thermautotrophicus (strain ATCC 29096 / DSM 1053 / JCM 10044 / NBRC 100330 / Delta H) (Methanobacterium thermoautotrophicum), this protein is Pyruvate synthase subunit PorA (porA).